An 852-amino-acid polypeptide reads, in one-letter code: Bifunctional uridylyltransferase/uridylyl-removing enzyme (852 aa).

Positions 1 to 318 are uridylyltransferase; sequence MPENLSSALE…STPMRVTLRI (318 aa). Positions 319 to 672 are uridylyl-removing; it reads DDDYIQVNNQ…SRILPQSDSF (354 aa). The region spanning 436–558 is the HD domain; it reads VDDHILAVVR…VQTHERLSAL (123 aa). 2 ACT domains span residues 673–757 and 785–852; these read QVMV…SCNR and SVEI…EQLA.

This sequence belongs to the GlnD family. The cofactor is Mg(2+).

The enzyme catalyses [protein-PII]-L-tyrosine + UTP = [protein-PII]-uridylyl-L-tyrosine + diphosphate. The catalysed reaction is [protein-PII]-uridylyl-L-tyrosine + H2O = [protein-PII]-L-tyrosine + UMP + H(+). With respect to regulation, uridylyltransferase (UTase) activity is inhibited by glutamine, while glutamine activates uridylyl-removing (UR) activity. Modifies, by uridylylation and deuridylylation, the PII regulatory proteins (GlnB and homologs), in response to the nitrogen status of the cell that GlnD senses through the glutamine level. Under low glutamine levels, catalyzes the conversion of the PII proteins and UTP to PII-UMP and PPi, while under higher glutamine levels, GlnD hydrolyzes PII-UMP to PII and UMP (deuridylylation). Thus, controls uridylylation state and activity of the PII proteins, and plays an important role in the regulation of nitrogen assimilation and metabolism. The protein is Bifunctional uridylyltransferase/uridylyl-removing enzyme of Neisseria gonorrhoeae (strain NCCP11945).